The following is an 859-amino-acid chain: ATP-dependent DNA helicase PIF1 (859 aa).

The N-terminal 45 residues, 1–45 (MPKWIRSTLNHIIPRRPFICSFNSFLLLKNVSHAKLSFSMSSRGF), are a transit peptide targeting the mitochondrion. Phosphoserine is present on residues S70 and S72. Positions 142 to 157 (NSFDQSSQKKSRSTGF) are enriched in polar residues. Positions 142 to 183 (NSFDQSSQKKSRSTGFKNPLRPALKKESSFDELQNSSISQER) are disordered. Phosphoserine is present on S169. The span at 172–182 (DELQNSSISQE) shows a compositional bias: polar residues. 258 to 265 (GSAGTGKS) contributes to the ATP binding site. S584 is modified (phosphoserine). The DNA-binding element occupies 727–746 (QAYVALSRAVSREGLQVLNF). The tract at residues 782 to 859 (KRKLDYAPGP…GQDTEDHILE (78 aa)) is disordered. Over residues 800-809 (KSNSPAPISA) the composition is skewed to low complexity. Residues 844-859 (VSDEPRGQDTEDHILE) are compositionally biased toward basic and acidic residues.

This sequence belongs to the helicase family. PIF1 subfamily. In terms of assembly, monomer in solution. DNA binding induces dimerization. Associates with mitochondrial and telomeric DNA. Binding to mtDNA is non-specific and the protein seems to coat the entire mtDNA molecule. Binds to the telomerase RNA TLC1. Interacts with the mitochondrial single-strand DNA-binding protein RIM1. The cofactor is Mg(2+). It depends on Mn(2+) as a cofactor. In terms of processing, phosphorylated. Undergoes RAD53-dependent phosphorylation in response to loss of mtDNA.

It localises to the nucleus. The protein localises to the nucleolus. The protein resides in the mitochondrion inner membrane. The catalysed reaction is Couples ATP hydrolysis with the unwinding of duplex DNA at the replication fork by translocating in the 5'-3' direction. This creates two antiparallel DNA single strands (ssDNA). The leading ssDNA polymer is the template for DNA polymerase III holoenzyme which synthesizes a continuous strand.. It catalyses the reaction ATP + H2O = ADP + phosphate + H(+). In terms of biological role, DNA-dependent ATPase and 5'-3' DNA helicase required for the maintenance of both mitochondrial and nuclear genome stability. Efficiently unwinds G-quadruplex (G4) DNA structures and forked RNA-DNA hybrids. Appears to move along DNA in single nucleotide or base pair steps, powered by hydrolysis of 1 molecule of ATP. Processes at an unwinding rate of about 75 bp/s. Resolves G4 structures, preventing replication pausing and double-strand breaks (DSBs) at G4 motifs. Involved in the maintenance of telomeric DNA. Inhibits telomere elongation, de novo telomere formation and telomere addition to DSBs via catalytic inhibition of telomerase. Reduces the processivity of telomerase by displacing active telomerase from DNA ends. Releases telomerase by unwinding the short telomerase RNA/telomeric DNA hybrid that is the intermediate in the telomerase reaction. Involved in the maintenance of ribosomal (rDNA). Required for efficient fork arrest at the replication fork barrier within rDNA. Involved in the maintenance of mitochondrial (mtDNA). Required to maintain mtDNA under conditions that introduce dsDNA breaks in mtDNA, either preventing or repairing dsDNA breaks. May inhibit replication progression to allow time for repair. May have a general role in chromosomal replication by affecting Okazaki fragment maturation. May have a role in conjunction with DNA2 helicase/nuclease in 5'-flap extension during Okazaki fragment processing. The chain is ATP-dependent DNA helicase PIF1 from Saccharomyces cerevisiae (strain YJM789) (Baker's yeast).